A 77-amino-acid chain; its full sequence is Large ribosomal subunit protein uL24c (77 aa).

This sequence belongs to the universal ribosomal protein uL24 family. In terms of assembly, part of the 50S ribosomal subunit.

It is found in the plastid. It localises to the chloroplast. Functionally, one of two assembly initiator proteins, it binds directly to the 5'-end of the 23S rRNA, where it nucleates assembly of the 50S subunit. The chain is Large ribosomal subunit protein uL24c (rpl24) from Thalassiosira pseudonana (Marine diatom).